A 376-amino-acid chain; its full sequence is Fibromodulin (376 aa).

Residues 1-18 (MQWTSLLLLAGLFSLSQA) form the signal peptide. Position 19 is a pyrrolidone carboxylic acid (Q19). Y20, Y38, Y39, Y45, Y47, Y53, and Y55 each carry sulfotyrosine. One can recognise an LRRNT domain in the interval 67–105 (SPSPPDPRDCPQECDCPPNFPTAMYCDNRNLKYLPFVPS). 8 LRR repeats span residues 106–127 (RMKY…VFDN), 130–151 (GLLW…RKVF), 156–176 (HLER…PLPR), 177–198 (SLRE…ALEG), 201–222 (NLTA…MRGL), 224–245 (SLIL…LPSA), 246–266 (LEQL…YFRG), and 269–289 (KLLY…ASNT). N127 carries an N-linked (GlcNAc...) (keratan sulfate) asparagine glycan. N-linked (GlcNAc...) (keratan sulfate) asparagine glycosylation is present at N166. An N-linked (GlcNAc...) (keratan sulfate) asparagine glycan is attached at N201. The N-linked (GlcNAc...) (keratan sulfate) asparagine glycan is linked to N291. LRR repeat units lie at residues 294 to 315 (SLLE…NTNL) and 316 to 335 (ENLY…SFCT). C334 and C367 are disulfide-bonded. An N-linked (GlcNAc...) asparagine glycan is attached at N341. One copy of the LRR 11 repeat lies at 344 to 365 (KLQVLRLDGNEIKRSAMPADAP).

Belongs to the small leucine-rich proteoglycan (SLRP) family. SLRP class II subfamily. As to quaternary structure, binds to type I and type II collagen. In terms of processing, binds keratan sulfate chains.

It localises to the secreted. The protein localises to the extracellular space. The protein resides in the extracellular matrix. In terms of biological role, affects the rate of fibrils formation. May have a primary role in collagen fibrillogenesis. The chain is Fibromodulin (FMOD) from Homo sapiens (Human).